The sequence spans 356 residues: MLTLSDFDFDLPPELIAQTALPDRTASRLLAARHDAQGTHFDDRQFADLVDYLRPGDLLVFNDTRVIKARFFGHKASGGKIEVLVERLLDEHTVLAQIRSSKSPVAGSTLRLADAFDVTVGPRHEPFFTLRFPQPALELIEQYGRLPLPPYIEHTPDSFDETRYQTVYARTPGAVAAPTAGLHFDDALFARLDAMGVRRGFLTLHVGAGTFSPVRVENIAEHRMHSEWYAISPDLAEAIRATRAVGGRIVAVGTTSMRALESAAQPDGTLAAGSGETDIFITPGYRFRLVDALVTNFHLPKSTLLMLVSAFAGLETIRAAYRHAIAQRYRFFSYGDAMFLTRAEPDTQSASPDPSC.

The protein belongs to the QueA family. As to quaternary structure, monomer.

It localises to the cytoplasm. It catalyses the reaction 7-aminomethyl-7-carbaguanosine(34) in tRNA + S-adenosyl-L-methionine = epoxyqueuosine(34) in tRNA + adenine + L-methionine + 2 H(+). Its pathway is tRNA modification; tRNA-queuosine biosynthesis. Transfers and isomerizes the ribose moiety from AdoMet to the 7-aminomethyl group of 7-deazaguanine (preQ1-tRNA) to give epoxyqueuosine (oQ-tRNA). This is S-adenosylmethionine:tRNA ribosyltransferase-isomerase from Ralstonia nicotianae (strain ATCC BAA-1114 / GMI1000) (Ralstonia solanacearum).